A 459-amino-acid chain; its full sequence is Exodeoxyribonuclease 7 large subunit (459 aa).

This sequence belongs to the XseA family. Heterooligomer composed of large and small subunits.

The protein resides in the cytoplasm. The catalysed reaction is Exonucleolytic cleavage in either 5'- to 3'- or 3'- to 5'-direction to yield nucleoside 5'-phosphates.. Bidirectionally degrades single-stranded DNA into large acid-insoluble oligonucleotides, which are then degraded further into small acid-soluble oligonucleotides. The protein is Exodeoxyribonuclease 7 large subunit of Pseudomonas syringae pv. tomato (strain ATCC BAA-871 / DC3000).